Consider the following 628-residue polypeptide: Probable alpha-L-arabinofuranosidase A (628 aa).

The signal sequence occupies residues 1 to 25 (MVAFSALSGVSAVSLLLSLVQNAHG). Asn-36, Asn-51, Asn-74, Asn-152, Asn-171, Asn-260, Asn-359, Asn-440, Asn-493, and Asn-610 each carry an N-linked (GlcNAc...) asparagine glycan.

The protein belongs to the glycosyl hydrolase 51 family.

It is found in the secreted. The catalysed reaction is Hydrolysis of terminal non-reducing alpha-L-arabinofuranoside residues in alpha-L-arabinosides.. Its pathway is glycan metabolism; L-arabinan degradation. In terms of biological role, alpha-L-arabinofuranosidase involved in the degradation of arabinoxylan, a major component of plant hemicellulose. Acts only on small linear 1,5-alpha-linked L-arabinofuranosyl oligosaccharides. This Aspergillus niger (strain ATCC MYA-4892 / CBS 513.88 / FGSC A1513) protein is Probable alpha-L-arabinofuranosidase A (abfA).